The following is a 343-amino-acid chain: NADH-quinone oxidoreductase subunit H (343 aa).

8 helical membrane-spanning segments follow: residues 19–39, 89–109, 124–144, 158–178, 198–218, 257–277, 279–299, and 314–334; these read VAWTLVKIMALVVPLMLGVAY, ALFILGPILAIAPALAAWAVI, LLYVMAITSMGVYGVIIAGWA, AAQIVSYEIAMGFALVGVLMA, WYLWPLFPLFVVYLVAGVAET, ILVAALTTLMFLGGWLSPVAF, PDGIVWWLLKTGFVLFLFLWF, and LGWKVFIPITIVWIVFVGGMM.

Belongs to the complex I subunit 1 family. As to quaternary structure, NDH-1 is composed of 14 different subunits. Subunits NuoA, H, J, K, L, M, N constitute the membrane sector of the complex.

It localises to the cell inner membrane. The enzyme catalyses a quinone + NADH + 5 H(+)(in) = a quinol + NAD(+) + 4 H(+)(out). Functionally, NDH-1 shuttles electrons from NADH, via FMN and iron-sulfur (Fe-S) centers, to quinones in the respiratory chain. The immediate electron acceptor for the enzyme in this species is believed to be ubiquinone. Couples the redox reaction to proton translocation (for every two electrons transferred, four hydrogen ions are translocated across the cytoplasmic membrane), and thus conserves the redox energy in a proton gradient. This subunit may bind ubiquinone. This is NADH-quinone oxidoreductase subunit H from Thiobacillus denitrificans (strain ATCC 25259 / T1).